The primary structure comprises 553 residues: Formate--tetrahydrofolate ligase 2 (553 aa).

63–70 contacts ATP; that stretch reads TSAGEGKS.

The protein belongs to the formate--tetrahydrofolate ligase family.

It carries out the reaction (6S)-5,6,7,8-tetrahydrofolate + formate + ATP = (6R)-10-formyltetrahydrofolate + ADP + phosphate. It participates in one-carbon metabolism; tetrahydrofolate interconversion. This Lactobacillus acidophilus (strain ATCC 700396 / NCK56 / N2 / NCFM) protein is Formate--tetrahydrofolate ligase 2.